We begin with the raw amino-acid sequence, 402 residues long: Speedy protein E2B (402 aa).

A disordered region spans residues 1-89 (MDRTETRFRK…EEPEKELAPE (89 aa)). A compositionally biased stretch (polar residues) spans 16–39 (GKITTSRQPHPQNEQSPQRSTSGY). Positions 76–89 (DESEEEPEKELAPE) are enriched in acidic residues.

Belongs to the Speedy/Ringo family.

In Homo sapiens (Human), this protein is Speedy protein E2B (SPDYE2B).